The sequence spans 89 residues: Small ribosomal subunit protein uS15 (89 aa).

Residues 1 to 18 (MALSAQEKDAIVKEHQTS) are compositionally biased toward basic and acidic residues. The disordered stretch occupies residues 1-25 (MALSAQEKDAIVKEHQTSETDTGSP).

The protein belongs to the universal ribosomal protein uS15 family. In terms of assembly, part of the 30S ribosomal subunit. Forms a bridge to the 50S subunit in the 70S ribosome, contacting the 23S rRNA.

One of the primary rRNA binding proteins, it binds directly to 16S rRNA where it helps nucleate assembly of the platform of the 30S subunit by binding and bridging several RNA helices of the 16S rRNA. Its function is as follows. Forms an intersubunit bridge (bridge B4) with the 23S rRNA of the 50S subunit in the ribosome. The chain is Small ribosomal subunit protein uS15 from Teredinibacter turnerae (strain ATCC 39867 / T7901).